The primary structure comprises 429 residues: Large ribosomal subunit protein mL37 (429 aa).

The transit peptide at 1–29 directs the protein to the mitochondrion; that stretch reads MALRPVVLRRAPAHSRGILTRPGPPRPRG. The interval 12–45 is disordered; it reads PAHSRGILTRPGPPRPRGPLPRTPWTTRGPPPDQ. Over residues 22–33 the composition is skewed to pro residues; the sequence is PGPPRPRGPLPR.

The protein belongs to the mitochondrion-specific ribosomal protein mL37 family. Component of the mitochondrial ribosome large subunit (39S) which comprises a 16S rRNA and about 50 distinct proteins.

The protein localises to the mitochondrion. This is Large ribosomal subunit protein mL37 (MRPL37) from Gallus gallus (Chicken).